The following is a 1976-amino-acid chain: DNA-directed RNA polymerase V subunit 1 (1976 aa).

Zn(2+) contacts are provided by cysteine 57, cysteine 60, cysteine 68, histidine 71, cysteine 98, and cysteine 101. Residues aspartate 449, aspartate 451, and aspartate 453 each contribute to the Mg(2+) site. The bridging helix stretch occupies residues proline 751 to glutamate 763. The stretch at tryptophan 1215–glycine 1216 is repeat 1. An 18 X 2 AA repeats of [WG]-[GW] repeats region spans residues tryptophan 1215–tryptophan 1693. Disordered stretches follow at residues glutamate 1272–proline 1291, aspartate 1298–leucine 1718, and phenylalanine 1847–threonine 1976. 2 stretches are compositionally biased toward basic and acidic residues: residues serine 1281–proline 1291 and aspartate 1298–lysine 1307. The stretch at tryptophan 1329 to glycine 1330 is repeat 2. The span at serine 1332–threonine 1348 shows a compositional bias: polar residues. Residues threonine 1349 to lysine 1371 show a composition bias toward basic and acidic residues. 15 consecutive repeat copies span residues tryptophan 1378–glycine 1379, tryptophan 1415–glycine 1416, tryptophan 1430–glycine 1431, tryptophan 1439–glycine 1440, tryptophan 1447–glycine 1448, tryptophan 1464–glycine 1465, tryptophan 1498–glycine 1499, tryptophan 1528–glycine 1529, tryptophan 1545–glycine 1546, tryptophan 1562–glycine 1563, tryptophan 1596–glycine 1597, tryptophan 1604–glycine 1605, tryptophan 1621–glycine 1622, tryptophan 1638–glycine 1639, and tryptophan 1641–glycine 1642. Basic and acidic residues predominate over residues tryptophan 1415–tryptophan 1430. Over residues threonine 1491–serine 1501 the composition is skewed to polar residues. Positions alanine 1648–serine 1678 are enriched in basic and acidic residues. 2 consecutive repeat copies span residues tryptophan 1680–glycine 1681 and glycine 1692–tryptophan 1693. Residues glutamate 1869–isoleucine 1878 are compositionally biased toward polar residues. The span at glutamine 1886–threonine 1976 shows a compositional bias: low complexity.

This sequence belongs to the RNA polymerase beta' chain family. As to quaternary structure, component of the RNA polymerase V complex. Interacts with NRPD4, NRPD2A, and (via C-terminus) with AGO4. Interacts with SUVH2. In terms of tissue distribution, mostly expressed in flowers, and, to a lower extent, in leaves. Present in sperm cells.

The protein localises to the nucleus. It is found in the nucleolus. It carries out the reaction RNA(n) + a ribonucleoside 5'-triphosphate = RNA(n+1) + diphosphate. Its function is as follows. DNA-dependent RNA polymerase catalyzes the transcription of DNA into RNA using the four ribonucleoside triphosphates as substrates. Largest and catalytic component of RNA polymerase V involved in RNA-directed DNA methylation-dependent (RdDM) silencing of endogenous repeated sequences, including transposable elements. Also required for full erasure of methylation when the RNA trigger is withdrawn. Seems also involved in the synthesis of short-interfering RNAs (siRNA). Essential component of a self-reinforcing loop coupling de novo DNA methylation to siRNA production. Involved in the maintenance of post-transcriptional RNA silencing. The sequence is that of DNA-directed RNA polymerase V subunit 1 (NRPE1) from Arabidopsis thaliana (Mouse-ear cress).